The sequence spans 271 residues: 3-methyl-2-oxobutanoate hydroxymethyltransferase (271 aa).

Mg(2+) contacts are provided by D51 and D90. 3-methyl-2-oxobutanoate-binding positions include 51–52 (DS), D90, and K119. E121 is a Mg(2+) binding site. The active-site Proton acceptor is E188.

This sequence belongs to the PanB family. As to quaternary structure, homodecamer; pentamer of dimers. Mg(2+) is required as a cofactor.

The protein localises to the cytoplasm. The enzyme catalyses 3-methyl-2-oxobutanoate + (6R)-5,10-methylene-5,6,7,8-tetrahydrofolate + H2O = 2-dehydropantoate + (6S)-5,6,7,8-tetrahydrofolate. It functions in the pathway cofactor biosynthesis; (R)-pantothenate biosynthesis; (R)-pantoate from 3-methyl-2-oxobutanoate: step 1/2. In terms of biological role, catalyzes the reversible reaction in which hydroxymethyl group from 5,10-methylenetetrahydrofolate is transferred onto alpha-ketoisovalerate to form ketopantoate. This Azoarcus sp. (strain BH72) protein is 3-methyl-2-oxobutanoate hydroxymethyltransferase.